The following is a 67-amino-acid chain: Large ribosomal subunit protein uL29 (67 aa).

This sequence belongs to the universal ribosomal protein uL29 family.

This is Large ribosomal subunit protein uL29 from Methanosarcina mazei (strain ATCC BAA-159 / DSM 3647 / Goe1 / Go1 / JCM 11833 / OCM 88) (Methanosarcina frisia).